The following is a 687-amino-acid chain: T-box transcription factor TBX2b (687 aa).

Residues leucine 103–aspartate 276 constitute a DNA-binding region (T-box). Disordered stretches follow at residues aspartate 303–serine 452 and asparagine 611–lysine 687. Composition is skewed to basic and acidic residues over residues glycine 338–aspartate 357, serine 375–serine 400, and asparagine 408–glutamate 430. 3 stretches are compositionally biased toward polar residues: residues asparagine 431–proline 451, asparagine 611–cysteine 630, and glycine 644–threonine 654. Residues threonine 654–serine 681 are a coiled coil. Basic and acidic residues predominate over residues serine 675–lysine 687.

In terms of assembly, binds DNA as a monomer. As to expression, expressed in the axial mesoderm, notably, in the notochordal precursor cells immediately before formation of the notochord and in the chordoneural hinge of the tail bud, after the notochord is formed. In addition, its expression is detected in the ventral forebrain, sensory neurons, fin buds and excretory system.

It localises to the nucleus. Transcription factor which acts as a transcriptional repressor. May also function as a transcriptional activator. Binds to the palindromic T site 5'-TTCACACCTAGGTGTGAA-3' DNA sequence, or a half-site, which are present in the regulatory region of several genes. Involved in the transcriptional regulation of genes required for mesoderm differentiation. Plays a role in the specification of late notochordal precursor cells and formation of the differentiated notochord. Required for cardiac atrioventricular canal formation. This Danio rerio (Zebrafish) protein is T-box transcription factor TBX2b (tbx2b).